The following is a 1363-amino-acid chain: Spike glycoprotein (1363 aa).

A signal peptide spans 1–13 (MFLILLISLPMAL). The Extracellular portion of the chain corresponds to 14–1307 (AVIGDLKCTT…GTYEYYVKWP (1294 aa)). In terms of domain architecture, BetaCoV S1-NTD spans 15 to 298 (VIGDLKCTTV…DFMSEIKCKT (284 aa)). Disulfide bonds link cysteine 21–cysteine 165, cysteine 160–cysteine 193, cysteine 172–cysteine 252, cysteine 286–cysteine 296, and cysteine 331–cysteine 356. 2 N-linked (GlcNAc...) asparagine; by host glycosylation sites follow: asparagine 59 and asparagine 133. Asparagine 198 carries N-linked (GlcNAc...) asparagine; by host glycosylation. Residues 329–617 (PDCNIEAWLN…DVNSGTTCST (289 aa)) form the BetaCoV S1-CTD domain. Asparagine 359 carries an N-linked (GlcNAc...) asparagine; by host glycan. 2 disulfide bridges follow: cysteine 374–cysteine 427 and cysteine 386–cysteine 615. Asparagine 437, asparagine 649, asparagine 676, asparagine 696, asparagine 714, asparagine 739, and asparagine 788 each carry an N-linked (GlcNAc...) asparagine; by host glycan. Fusion peptide regions lie at residues 914 to 935 (SAIE…VEAY) and 933 to 953 (EAYN…VQSY). Asparagine 937 is a glycosylation site (N-linked (GlcNAc...) asparagine; by host). Cysteine 938 and cysteine 949 are oxidised to a cystine. The heptad repeat 1 stretch occupies residues 1014 to 1064 (QKLIANAFNNALDAIQEGFDATNSALVKIQAVVNANAEALNNLLQQLSNRF). The stretch at 1043–1087 (QAVVNANAEALNNLLQQLSNRFGAISSSLQEILSRLDALEAQRQI) forms a coiled coil. N-linked (GlcNAc...) asparagine; by host glycans are attached at residues asparagine 1194, asparagine 1224, asparagine 1234, asparagine 1253, asparagine 1267, and asparagine 1288. Residues 1258-1296 (APDLSLDYINVTFLDLQDEMNRLQEAIKLLNQSYINLKD) are heptad repeat 2. Residues 1269–1297 (TFLDLQDEMNRLQEAIKLLNQSYINLKDI) adopt a coiled-coil conformation. Residues 1308 to 1328 (WYVWLLIGFAGVAMLVLLFFI) traverse the membrane as a helical segment. Topologically, residues 1329 to 1363 (CCCTGCGTSCFKKCGGCCDDYTGHQELVIKTSHDD) are cytoplasmic. Positions 1359-1363 (TSHDD) match the KxHxx motif.

It belongs to the betacoronaviruses spike protein family. As to quaternary structure, homotrimer; each monomer consists of a S1 and a S2 subunit. The resulting peplomers protrude from the virus surface as spikes. Post-translationally, specific enzymatic cleavages in vivo yield mature proteins. The precursor is processed into S1 and S2 by host cell furin or another cellular protease to yield the mature S1 and S2 proteins. Additionally, a second cleavage leads to the release of a fusion peptide after viral attachment to host cell receptor. The cytoplasmic Cys-rich domain is palmitoylated. Spike glycoprotein is digested within host endosomes.

It is found in the virion membrane. The protein localises to the host endoplasmic reticulum-Golgi intermediate compartment membrane. It localises to the host cell membrane. In terms of biological role, attaches the virion to the cell membrane by interacting with host receptor, initiating the infection. Functionally, mediates fusion of the virion and cellular membranes by acting as a class I viral fusion protein. Under the current model, the protein has at least three conformational states: pre-fusion native state, pre-hairpin intermediate state, and post-fusion hairpin state. During viral and target cell membrane fusion, the coiled coil regions (heptad repeats) assume a trimer-of-hairpins structure, positioning the fusion peptide in close proximity to the C-terminal region of the ectodomain. The formation of this structure appears to drive apposition and subsequent fusion of viral and target cell membranes. Acts as a viral fusion peptide which is unmasked following S2 cleavage occurring upon virus endocytosis. In Bos taurus (Bovine), this protein is Spike glycoprotein.